The chain runs to 377 residues: Flagellin C (377 aa).

Coiled coils occupy residues 103 to 129 and 301 to 340; these read SNSKADRVAIQEEITALNDELNRVAET and VDSHRAELGAFQNRFNHAINNLDNINENVNASKSRIKDTD.

This sequence belongs to the bacterial flagellin family. In terms of assembly, heteromer of multiple flagellin subunits including FlaA, FlaB, FlaC, FlaD and FlaE.

Its subcellular location is the secreted. The protein resides in the bacterial flagellum. Its function is as follows. Flagellin is the subunit protein which polymerizes to form the filaments of bacterial flagella. FlaC is not essential for flagellar synthesis and motility. The sequence is that of Flagellin C (flaC) from Vibrio cholerae serotype O1 (strain ATCC 39541 / Classical Ogawa 395 / O395).